Reading from the N-terminus, the 170-residue chain is Phosphopantetheine adenylyltransferase (170 aa).

Thr18 is a substrate binding site. ATP contacts are provided by residues 18–19 (TF) and His26. Substrate contacts are provided by Lys50, Leu84, and Arg98. ATP-binding positions include 99–101 (GLR), Glu109, and 134–140 (WIYISSS).

It belongs to the bacterial CoaD family. Homohexamer. The cofactor is Mg(2+).

Its subcellular location is the cytoplasm. The catalysed reaction is (R)-4'-phosphopantetheine + ATP + H(+) = 3'-dephospho-CoA + diphosphate. It functions in the pathway cofactor biosynthesis; coenzyme A biosynthesis; CoA from (R)-pantothenate: step 4/5. Its function is as follows. Reversibly transfers an adenylyl group from ATP to 4'-phosphopantetheine, yielding dephospho-CoA (dPCoA) and pyrophosphate. The protein is Phosphopantetheine adenylyltransferase of Desulfotalea psychrophila (strain LSv54 / DSM 12343).